A 709-amino-acid chain; its full sequence is Polyribonucleotide nucleotidyltransferase (709 aa).

Residues aspartate 487 and aspartate 493 each contribute to the Mg(2+) site. The region spanning 554-613 (PRIHTMKISVEKIKDVIGKGGAVIRQLTEETGTTIEIEDDGTIKIAATDGDQAKEAIRRI) is the KH domain. The region spanning 623 to 691 (GVIYTGKVAR…RQGRVRLSMK (69 aa)) is the S1 motif domain.

This sequence belongs to the polyribonucleotide nucleotidyltransferase family. Component of the RNA degradosome, which is a multiprotein complex involved in RNA processing and mRNA degradation. Mg(2+) serves as cofactor.

It is found in the cytoplasm. The catalysed reaction is RNA(n+1) + phosphate = RNA(n) + a ribonucleoside 5'-diphosphate. Involved in mRNA degradation. Catalyzes the phosphorolysis of single-stranded polyribonucleotides processively in the 3'- to 5'-direction. The polypeptide is Polyribonucleotide nucleotidyltransferase (Vibrio cholerae serotype O1 (strain ATCC 39315 / El Tor Inaba N16961)).